The sequence spans 301 residues: Acetylglutamate kinase (301 aa).

Residues 68-69 (GG), Arg-90, and Asn-195 each bind substrate.

Belongs to the acetylglutamate kinase family. ArgB subfamily.

Its subcellular location is the cytoplasm. The enzyme catalyses N-acetyl-L-glutamate + ATP = N-acetyl-L-glutamyl 5-phosphate + ADP. It participates in amino-acid biosynthesis; L-arginine biosynthesis; N(2)-acetyl-L-ornithine from L-glutamate: step 2/4. Catalyzes the ATP-dependent phosphorylation of N-acetyl-L-glutamate. The protein is Acetylglutamate kinase of Pseudomonas fluorescens (strain ATCC BAA-477 / NRRL B-23932 / Pf-5).